We begin with the raw amino-acid sequence, 243 residues long: Uridylate kinase (243 aa).

Residue 12–15 (KLSG) participates in ATP binding. Glycine 54 contacts UMP. ATP is bound by residues glycine 55 and arginine 59. 135–142 (TGNPYFTT) is a binding site for UMP. Asparagine 163, tyrosine 169, and aspartate 172 together coordinate ATP.

Belongs to the UMP kinase family. Homohexamer.

It localises to the cytoplasm. It catalyses the reaction UMP + ATP = UDP + ADP. It participates in pyrimidine metabolism; CTP biosynthesis via de novo pathway; UDP from UMP (UMPK route): step 1/1. With respect to regulation, inhibited by UTP. In terms of biological role, catalyzes the reversible phosphorylation of UMP to UDP. In Roseiflexus sp. (strain RS-1), this protein is Uridylate kinase.